Here is a 331-residue protein sequence, read N- to C-terminus: DNA-directed RNA polymerase subunit alpha (331 aa).

Residues 1–226 form an alpha N-terminal domain (alpha-NTD) region; that stretch reads MLIAQRPTLT…ELFGLARELN (226 aa). The interval 243-331 is alpha C-terminal domain (alpha-CTD); that stretch reads LSSELSMPIE…SYDEDETTTN (89 aa).

The protein belongs to the RNA polymerase alpha chain family. In terms of assembly, homodimer. The RNAP catalytic core consists of 2 alpha, 1 beta, 1 beta' and 1 omega subunit. When a sigma factor is associated with the core the holoenzyme is formed, which can initiate transcription.

The catalysed reaction is RNA(n) + a ribonucleoside 5'-triphosphate = RNA(n+1) + diphosphate. DNA-dependent RNA polymerase catalyzes the transcription of DNA into RNA using the four ribonucleoside triphosphates as substrates. The sequence is that of DNA-directed RNA polymerase subunit alpha from Clavibacter michiganensis subsp. michiganensis (strain NCPPB 382).